The chain runs to 174 residues: Protein C (174 aa).

The protein belongs to the morbillivirus protein C family.

This is Protein C (P/V/C) from Phocine distemper virus (PDV).